We begin with the raw amino-acid sequence, 421 residues long: Testin (421 aa).

The 108-residue stretch at Met-92–Asp-199 folds into the PET domain. The disordered stretch occupies residues Glu-133–Cys-164. Residues Pro-155–Cys-164 show a composition bias toward basic and acidic residues. LIM zinc-binding domains lie at Tyr-234 to Glu-297, Pro-299 to Val-359, and Gln-362 to Ser-421.

This sequence belongs to the prickle / espinas / testin family. In terms of assembly, interacts via LIM domain 1 with ZYX. Interacts (via LIM domain 3) with ENAH and VASP. Interacts with ALKBH4, talin, actin, alpha-actinin, GRIP1 and PXN. Interacts (via LIM domain 2) with ACTL7A (via N-terminus). Heterodimer with ACTL7A; the heterodimer interacts with ENAH to form a heterotrimer.

The protein localises to the cytoplasm. Its subcellular location is the cell junction. It localises to the focal adhesion. Its function is as follows. Scaffold protein that may play a role in cell adhesion, cell spreading and in the reorganization of the actin cytoskeleton. Plays a role in the regulation of cell proliferation. May act as a tumor suppressor. This is Testin (TES) from Ateles geoffroyi (Black-handed spider monkey).